The following is a 655-amino-acid chain: Alpha-amylase (655 aa).

Residue Glu123 is the Nucleophile of the active site. Asp214 serves as the catalytic Proton donor.

The protein belongs to the glycosyl hydrolase 57 family.

The enzyme catalyses Endohydrolysis of (1-&gt;4)-alpha-D-glucosidic linkages in polysaccharides containing three or more (1-&gt;4)-alpha-linked D-glucose units.. This chain is Alpha-amylase (amyA), found in Pyrococcus abyssi (strain GE5 / Orsay).